Here is a 55-residue protein sequence, read N- to C-terminus: Large ribosomal subunit protein bL33 (55 aa).

Positions 1-11 (MAKGGREKIKL) are enriched in basic and acidic residues. Residues 1-26 (MAKGGREKIKLESTAGTGHFYTTDKN) are disordered.

Belongs to the bacterial ribosomal protein bL33 family.

The protein is Large ribosomal subunit protein bL33 of Methylibium petroleiphilum (strain ATCC BAA-1232 / LMG 22953 / PM1).